The following is a 398-amino-acid chain: Acetate kinase (398 aa).

Residue asparagine 7 participates in Mg(2+) binding. Lysine 14 is an ATP binding site. Arginine 91 contacts substrate. Aspartate 148 acts as the Proton donor/acceptor in catalysis. Residues 208 to 212, 283 to 285, and 331 to 335 contribute to the ATP site; these read HLGNG, DFR, and GLGEN. Glutamate 384 is a binding site for Mg(2+).

It belongs to the acetokinase family. In terms of assembly, homodimer. Mg(2+) is required as a cofactor. The cofactor is Mn(2+).

It localises to the cytoplasm. The enzyme catalyses acetate + ATP = acetyl phosphate + ADP. The protein operates within metabolic intermediate biosynthesis; acetyl-CoA biosynthesis; acetyl-CoA from acetate: step 1/2. Its function is as follows. Catalyzes the formation of acetyl phosphate from acetate and ATP. Can also catalyze the reverse reaction. The sequence is that of Acetate kinase from Natranaerobius thermophilus (strain ATCC BAA-1301 / DSM 18059 / JW/NM-WN-LF).